A 143-amino-acid polypeptide reads, in one-letter code: Large ribosomal subunit protein uL15 (143 aa).

A disordered region spans residues 1 to 51 (MELNGIKPAAGAKHAKRRVGRGIGSGIGKTAGRGHKGQKSRAGGFHKVGFE). The span at 21-31 (RGIGSGIGKTA) shows a compositional bias: gly residues.

It belongs to the universal ribosomal protein uL15 family. In terms of assembly, part of the 50S ribosomal subunit.

Functionally, binds to the 23S rRNA. In Variovorax paradoxus (strain S110), this protein is Large ribosomal subunit protein uL15.